The chain runs to 456 residues: Protein odr-4 homolog (456 aa).

The segment covering 374–401 (IESSKNNNNNNNNNNNNNNNNNNNNSKL) has biased composition (low complexity). Positions 374–403 (IESSKNNNNNNNNNNNNNNNNNNNNSKLSN) are disordered. A helical transmembrane segment spans residues 436–456 (YLIIIISVLVLMVAFYFKFFV).

Belongs to the ODR-4 family.

It localises to the membrane. Its function is as follows. May play a role in the trafficking of a subset of G-protein coupled receptors. The polypeptide is Protein odr-4 homolog (Dictyostelium discoideum (Social amoeba)).